A 156-amino-acid chain; its full sequence is FAD synthase (156 aa).

Residues 9-10 (TF), 14-17 (HPGH), N92, and H119 each bind ATP.

Belongs to the archaeal FAD synthase family. In terms of assembly, homodimer. Requires a divalent metal cation as cofactor.

It carries out the reaction FMN + ATP + H(+) = FAD + diphosphate. The protein operates within cofactor biosynthesis; FAD biosynthesis; FAD from FMN: step 1/1. Catalyzes the transfer of the AMP portion of ATP to flavin mononucleotide (FMN) to produce flavin adenine dinucleotide (FAD) coenzyme. This chain is FAD synthase, found in Methanospirillum hungatei JF-1 (strain ATCC 27890 / DSM 864 / NBRC 100397 / JF-1).